The primary structure comprises 862 residues: Protein translocase subunit SecA (862 aa).

Residues Gln-88, 106–110 (GEGKT), and Asp-506 contribute to the ATP site. Zn(2+) contacts are provided by Cys-839, Cys-841, Cys-850, and His-851.

This sequence belongs to the SecA family. Monomer and homodimer. Part of the essential Sec protein translocation apparatus which comprises SecA, SecYEG and auxiliary proteins SecDF-YajC and YidC. Zn(2+) serves as cofactor.

It is found in the cell inner membrane. It localises to the cytoplasm. It catalyses the reaction ATP + H2O + cellular proteinSide 1 = ADP + phosphate + cellular proteinSide 2.. In terms of biological role, part of the Sec protein translocase complex. Interacts with the SecYEG preprotein conducting channel. Has a central role in coupling the hydrolysis of ATP to the transfer of proteins into and across the cell membrane, serving as an ATP-driven molecular motor driving the stepwise translocation of polypeptide chains across the membrane. This chain is Protein translocase subunit SecA, found in Campylobacter jejuni (strain RM1221).